Here is a 444-residue protein sequence, read N- to C-terminus: MALKVEAKGGKVGIQWDDGSDYHDVTKIYVRGGLEGIQFIKFEYVKAGKKVIGPIHGASGRGFTETFEINNLEKEYLLSIEGYYNASTGVIQCLQFITNKKTYDPIGYNEGARFTLSASRSKIIGFHGFADKYLNSLGAYFIKIPSIQSAIEGAKTTGKGFDDGGDYDGIRKVYVTTDGSAIRHVRFDYDKAGQVETRERGAKTGTQHEFTVNHPYEYITSVEGTYAHTQPYNCVVLTSLTFKTSKGRASPAIGKVTGSKFKLERQGDAIVGFHGRVGSCIDGIGVYYAPLPPSPPPPEKLQGQGGDGGDSWDDGAFKNVKKIYVGQGDVGIAAVKFEYETYTSEVILAERHGKETLLGYEEFELDYPSEYITAVEGCHDKVIGSETGVITMLRFKTNKRNSPPFGLESAFSFILEKDGHKIVGFHGKASTLLHQIGVHVTAIA.

At alanine 2 the chain carries N-acetylalanine. 3 consecutive Jacalin-type lectin domains span residues alanine 2–lysine 143, serine 146–proline 290, and proline 298–alanine 442.

It belongs to the jacalin lectin family.

The polypeptide is Jacalin-related lectin 11 (JAL11) (Arabidopsis thaliana (Mouse-ear cress)).